The chain runs to 838 residues: G-protein coupled receptor-associated sorting protein 2 (838 aa).

Disordered regions lie at residues 1–122 (MTGA…GARP), 218–292 (ASNE…SNPF), 349–368 (RFRHRDKEDPNTALKLRAQK), and 531–552 (LELSPEGEEQESLLQPDQPSPE). Over residues 13–31 (KPEKKAGEEVIAGPEREND) the composition is skewed to basic and acidic residues. A compositionally biased stretch (polar residues) spans 220-245 (NESGFWSADETSTASSFWTGEETSVR). Residues 255 to 271 (RSRHRAKHQTNPRSRPR) are compositionally biased toward basic residues. Residues S282 and S284 each carry the phosphoserine modification. The span at 542-552 (SLLQPDQPSPE) shows a compositional bias: polar residues.

The protein belongs to the GPRASP family. In terms of assembly, interacts with cytoplasmic tails of a variety of G-protein coupled receptors such as muscarinic acetylcholine receptor M1/CHRM1 and calcitonin receptor/CALCR. Expressed in the brain.

May play a role in regulation of a variety of G-protein coupled receptors. This is G-protein coupled receptor-associated sorting protein 2 (GPRASP2) from Homo sapiens (Human).